The chain runs to 283 residues: MTATIIDGKETAREKREQLAKEVEELKKQGVTPGLAVILIGDDPASHSYVRGKKKAAETMGMNFKLDQFDSSLTEAELLSIIDQYNQDPEFHGILVQLPLPDHISEKAVIERISPDKDVDGFHPLNVGKMLLGEDTFLPCTPHGIVELLKKTNIDLSGKEVVVVGRSNIVGKPVGQLLLNENATVTYCHSRTENITEHTKKADILVVAVGRANFISADQIKEGAVVIDVGVNRLENGKLCGDVEFEGAKEKASFITPVPGGVGPMTITMLAHNTVKSAKRTLS.

NADP(+)-binding positions include 165–167 (GRS), S190, and V231.

Belongs to the tetrahydrofolate dehydrogenase/cyclohydrolase family. As to quaternary structure, homodimer. Interacts with BrxC.

The catalysed reaction is (6R)-5,10-methylene-5,6,7,8-tetrahydrofolate + NADP(+) = (6R)-5,10-methenyltetrahydrofolate + NADPH. The enzyme catalyses (6R)-5,10-methenyltetrahydrofolate + H2O = (6R)-10-formyltetrahydrofolate + H(+). Its pathway is one-carbon metabolism; tetrahydrofolate interconversion. Its function is as follows. Catalyzes the oxidation of 5,10-methylenetetrahydrofolate to 5,10-methenyltetrahydrofolate and then the hydrolysis of 5,10-methenyltetrahydrofolate to 10-formyltetrahydrofolate. The chain is Bifunctional protein FolD from Bacillus subtilis (strain 168).